Reading from the N-terminus, the 176-residue chain is Pituitary adenylate cyclase-activating polypeptide (176 aa).

Positions 1-24 (MTMCSGARLALLVYGIIMHSSVYC) are cleaved as a signal peptide. Residues 25-80 (SPAAAGLRFPGIRPEDEAYDEDGNPLQDFYDSDPPGVGGPASTLRDAYALYYPAEE) constitute a propeptide that is removed on maturation. Positions 150–158 (VKKYLAAVL) are important for receptor binding. Leucine 158 bears the Leucine amide mark. Position 169 is a lysine amide (lysine 169). The propeptide occupies 173 to 176 (IAYL).

It belongs to the glucagon family.

The protein localises to the secreted. Its function is as follows. PACAP is a neuropeptide involved in diverse array of physiological processes through activating the PACAP subfamily of class B1 G protein-coupled receptors: VIP receptor 1 (VIPR1), VIP receptor 2 (VIPR2), and PACAP type I receptor (ADCYAP1R1). Exerts neuroprotective and general cytoprotective effects due to anti-apoptotic, anti-inflammatory, and antioxidant actions. Promotes neuron projection development through the RAPGEF2/Rap1/B-Raf/ERK pathway. In chromaffin cells, induces long-lasting increase of intracellular calcium concentrations and neuroendocrine secretion. Involved in the control of glucose homeostasis, induces insulin secretion by pancreatic beta cells. PACAP exists in two bioactive forms from proteolysis of the same precursor protein, PACAP27 and PACAP38, which differ by eleven amino acid residues in the C-terminus. The chain is Pituitary adenylate cyclase-activating polypeptide (ADCYAP1) from Sus scrofa (Pig).